The sequence spans 474 residues: Carbohydrate sulfotransferase 3 (474 aa).

Over 1-19 (MEKGLALPQDCRDLVHNLK) the chain is Cytoplasmic. A helical; Signal-anchor for type II membrane protein transmembrane segment spans residues 20–38 (IRGRYVLFLAFVVIVFIFI). The Lumenal segment spans residues 39-474 (EKENKIISRV…LEERGTFWVT (436 aa)). Asparagine 63, asparagine 74, and asparagine 96 each carry an N-linked (GlcNAc...) asparagine glycan. 137–143 (TRTGSSF) contacts 3'-phosphoadenylyl sulfate. Asparagine 252 carries N-linked (GlcNAc...) asparagine glycosylation. 297–305 (RDPRAVLAS) is a 3'-phosphoadenylyl sulfate binding site. N-linked (GlcNAc...) asparagine glycosylation is found at asparagine 415 and asparagine 459.

This sequence belongs to the sulfotransferase 1 family. Gal/GlcNAc/GalNAc subfamily. N-glycosylated.

The protein resides in the golgi apparatus membrane. The enzyme catalyses chondroitin beta-D-glucuronate + n 3'-phosphoadenylyl sulfate = chondroitin 6'-sulfate + n adenosine 3',5'-bisphosphate + n H(+). It carries out the reaction 3'-phosphoadenylyl sulfate + keratan = adenosine 3',5'-bisphosphate + keratan 6'-sulfate.. Its function is as follows. Sulfotransferase that utilizes 3'-phospho-5'-adenylyl sulfate (PAPS) as sulfonate donor to catalyze the transfer of sulfate to position 6 of the N-acetylgalactosamine (GalNAc) residue of chondroitin. Chondroitin sulfate constitutes the predominant proteoglycan present in cartilage and is distributed on the surfaces of many cells and extracellular matrices. Catalyzes with a lower efficiency the sulfation of Gal residues of keratan sulfate, another glycosaminoglycan. Can also catalyze the sulfation of the Gal residues in sialyl N-acetyllactosamine (sialyl LacNAc) oligosaccharides. May play a role in the maintenance of naive T-lymphocytes in the spleen. In Rattus norvegicus (Rat), this protein is Carbohydrate sulfotransferase 3 (Chst3).